The following is a 74-amino-acid chain: U3-agatoxin-Ao1g (74 aa).

Residues 1–20 form the signal peptide; the sequence is MRAIISLLLISTMVFGVIEA. Positions 21 to 34 are excised as a propeptide; that stretch reads VSVEEGLKIFEGER. Intrachain disulfides connect cysteine 37/cysteine 53, cysteine 44/cysteine 58, cysteine 52/cysteine 68, and cysteine 60/cysteine 66. Asparagine 72 is subject to Asparagine amide.

It belongs to the neurotoxin 07 (Beta/delta-agtx) family. 03 (aga-4) subfamily. Aga sub-subfamily. As to expression, expressed by the venom gland.

The protein resides in the secreted. Insecticidal neurotoxin that modulates the insect Nav channel (DmNaV1/tipE (para/tipE)) in a unique manner, with both the activation and inactivation processes being affected. The voltage dependence of activation is shifted toward more hyperpolarized potentials (analogous to site 4 toxins) and a non-inactivating persistent sodium current is induced (site 3-like action). Interestingly, both effects take place in a voltage-dependent manner, producing a bell-shaped curve between -80 and 0 mV. The protein is U3-agatoxin-Ao1g of Agelena orientalis (Funnel-web spider).